A 512-amino-acid polypeptide reads, in one-letter code: Acid-sensing ion channel 2 (512 aa).

The Cytoplasmic segment spans residues 1–37 (MDLKESPSEGSLQPSSIQIFANTSTLHGIRHIFVYGP). S8 and S11 each carry phosphoserine. A helical membrane pass occupies residues 38–58 (LTIRRVLWAVAFVGSLGLLLV). At 59–427 (ESSERVSYYF…EQKKAYEVAA (369 aa)) the chain is on the extracellular side. Intrachain disulfides connect C92-C193, C289-C364, C307-C360, C311-C358, C320-C342, and C322-C334. N-linked (GlcNAc...) asparagine glycans are attached at residues N365 and N392. Residues 428–448 (LLGDIGGQMGLFIGASILTIL) form a helical membrane-spanning segment. A GAS motif; ion selectivity filter motif is present at residues 441-443 (GAS). At 449–512 (ELFDYIYELI…ALGTLEEIAC (64 aa)) the chain is on the cytoplasmic side.

Belongs to the amiloride-sensitive sodium channel (TC 1.A.6) family. ASIC2 subfamily. Can form homotrimers. Heterotrimer; forms functional heterotrimers producing channel with different properties. Forms heterotrimers with ASIC1; while ASIC1 determines current amplitude, ASIC2 influences the properties of the current. Forms heterotrimers with ASIC3; resulting in channels with distinct properties. Interacts with STOM; STOM regulates the gating of ASIC2-containing channels. Interacts with PICK1; promotes ASIC3 phosphorylation by PKC and activation of ASIC2/ASIC3 heterotrimers. In terms of tissue distribution, expressed by sensory neurons. Expressed by nociceptive sensory neurons, spiral ganglion (SG) neurons and the retina (at protein level). Expressed in outer nuclear layer of retina (photoreceptors) and to a lower extent in distal and proximal inner nuclear layer.

It localises to the cell membrane. It catalyses the reaction Na(+)(in) = Na(+)(out). The enzyme catalyses K(+)(in) = K(+)(out). The catalysed reaction is Li(+)(in) = Li(+)(out). Its activity is regulated as follows. Inhibited by the diuretic drug amiloride. Its function is as follows. Forms pH-gated trimeric sodium channels that act as postsynaptic excitatory sensors in the nervous system. Upon extracellular acidification, these channels generate rapid, transient inward currents that fully desensitize. Highly selective for sodium, they are permeable to other cations. By forming heterotrimeric channels with ASIC1, could contribute to synaptic plasticity, learning, and memory. Additionally, as acid sensors at nerve terminals, plays a role in mechanosensation and phototransduction. Has no pH-gated sodium channel activity per se but can associate with other ASICs to produce functional channels with specific properties. This Mus musculus (Mouse) protein is Acid-sensing ion channel 2.